The primary structure comprises 439 residues: Glutamate-1-semialdehyde 2,1-aminomutase (439 aa).

The residue at position 273 (K273) is an N6-(pyridoxal phosphate)lysine.

It belongs to the class-III pyridoxal-phosphate-dependent aminotransferase family. HemL subfamily. As to quaternary structure, homodimer. The cofactor is pyridoxal 5'-phosphate.

It localises to the cytoplasm. The catalysed reaction is (S)-4-amino-5-oxopentanoate = 5-aminolevulinate. It functions in the pathway porphyrin-containing compound metabolism; protoporphyrin-IX biosynthesis; 5-aminolevulinate from L-glutamyl-tRNA(Glu): step 2/2. This Paenarthrobacter aurescens (strain TC1) protein is Glutamate-1-semialdehyde 2,1-aminomutase.